Reading from the N-terminus, the 7182-residue chain is Replicase polyprotein 1ab (7182 aa).

The 127-residue stretch at 25–151 (RTDHVSLKAS…EFQFLLRKKG (127 aa)) folds into the CoV Nsp1 globular domain. The region spanning 159-195 (DAPWDYNWTPYSDLMDALEADPCGKYSQSLLKKLVGG) is the BetaCoV Nsp1 C-terminal domain. The CoV Nsp2 N-terminal domain occupies 197-473 (FTPIDQYMCG…WSKVCETANL (277 aa)). Zn(2+) contacts are provided by C340, C343, C359, and C361. A C4 region spans residues 340-361 (CTSCGKGSWLTGNAVQGFACDC). One can recognise a CoV Nsp2 middle domain in the interval 479 to 713 (QHAINFVNEF…MHILSKAMQL (235 aa)). Residues 715–851 (HTTVSWAGSK…VPTLFRLKGG (137 aa)) form the CoV Nsp2 C-terminal domain. One can recognise a Ubiquitin-like 1 domain in the interval 855–964 (KGVKFGGEQT…MTFSVNPVEE (110 aa)). 2 Macro domains span residues 1186–1345 (PLKN…KVYN) and 1354–1480 (TGLT…AVQT). The DPUP domain occupies 1480-1553 (TPEQSFINTV…LEKCRTYLTS (74 aa)). The region spanning 1558 to 1613 (QKNVDVLVTIDGVNFRTVVLNNTTTYRVQLGSVFYKGSDISDTIPTEKMSGEAVYL) is the Ubiquitin-like 2 domain. Positions 1628-1902 (VYGTADTAFL…WADVDPDLSA (275 aa)) constitute a Peptidase C16 domain. Residue C1668 is the For PL-PRO activity of the active site. Zn(2+)-binding residues include C1748, C1751, C1783, and C1785. The C4-type zinc finger occupies 1748–1785 (CNVCGVQDTTTTGLKACIYVGMNSLDELHATHEECCQC). Active-site for PL-PRO activity residues include H1838 and D1853. The Nucleic acid-binding domain occupies 1916 to 2033 (VIEYSPATIL…QVYDIAPVTL (118 aa)). One can recognise a G2M domain in the interval 2059-2179 (PQSPVQVAED…ASVTVNVTTA (121 aa)). The next 3 helical transmembrane spans lie at 2158 to 2178 (ILLG…NVTT), 2196 to 2216 (GIIG…FTFW), and 2268 to 2288 (LLFL…LFLF). The tract at residues 2158–2441 (ILLGASSLFA…VTHIPLLGLV (284 aa)) is HD1. Residues 2305 to 2371 (LATYRELRSY…FQMIQTHVTS (67 aa)) enclose the 3Ecto domain. 2 disulfide bridges follow: C2321-C2349 and C2339-C2346. A run of 3 helical transmembrane segments spans residues 2372-2392 (YVIN…YVLY), 2396-2416 (FNVL…GAFV), and 2421-2441 (YNYL…LGLV). Positions 2455–2545 (RFYNHVINGC…SLRRLVKPTD (91 aa)) are Y1. The CoV Nsp3 Y domain maps to 2455–2828 (RFYNHVINGC…LSVKFSATKL (374 aa)). Zn(2+) contacts are provided by H2459, C2464, C2469, C2472, C2505, H2508, C2512, and C2515. Positions 2459–2472 (HVINGCKDTACLLC) are ZF1. The ZF2 stretch occupies residues 2505–2515 (CCRHNWNCVDC). The segment at 2546–2644 (KSHYYVESVT…LVDSNMVTTV (99 aa)) is Y2. The interval 2546–2828 (KSHYYVESVT…LSVKFSATKL (283 aa)) is coV-Y. A Y3 region spans residues 2645-2727 (GDSREIASKM…DALQYAYKHD (83 aa)). A Y4 region spans residues 2728–2828 (LQLTTEGFNN…LSVKFSATKL (101 aa)). 4 helical membrane-spanning segments follow: residues 2848–2868 (CVVT…LPAF), 3119–3139 (STSL…FYYV), 3152–3172 (CAVV…FVVS), and 3203–3223 (WFVM…IVGV). An HD2 region spans residues 2848-3223 (CVVTLVVFAM…WMVFAYIVGV (376 aa)). The 97-residue stretch at 3242–3338 (VFTDGKLNCS…NCSVTSSVLQ (97 aa)) folds into the Nsp4C domain. In terms of domain architecture, Peptidase C30 spans 3339-3644 (SGLVKMAAPS…NMQVMGVVMQ (306 aa)). Active-site for 3CL-PRO activity residues include H3379 and C3486. A run of 7 helical transmembrane segments spans residues 3650–3670 (ISYG…VATL), 3684–3704 (VIPL…MLTV), 3709–3729 (TFLT…NIVY), 3760–3777 (LGVY…VRRL), 3782–3802 (ASNL…YTTG), 3823–3843 (VTVF…FLYA), and 3855–3875 (LVLL…GVFS). The segment at 3650–3875 (ISYGLVHWLF…FCTVYFGVFS (226 aa)) is HD3. The 83-residue stretch at 3937–4019 (SKLTDLKCTS…DLLDHPSVLQ (83 aa)) folds into the RdRp Nsp7 cofactor domain. The region spanning 4020–4218 (ATLSEFSHLA…RAASSAVTLQ (199 aa)) is the RdRp Nsp8 cofactor domain. A Nsp9 ssRNA-binding domain is found at 4219–4328 (NNEIRPSGLK…GHIAATVRLQ (110 aa)). An ExoN/MTase coactivator domain is found at 4329-4467 (AGSNTEFAIN…DALRGTTIPQ (139 aa)). Zn(2+)-binding residues include C4402, C4405, H4411, C4418, C4444, C4447, C4455, and C4457. Zinc fingers lie at residues 4402–4418 (CLYC…TGVC) and 4444–4457 (CNVC…GCNC). The region spanning 4473 to 4730 (FLNRVRGSIV…AAETHRDCDL (258 aa)) is the NiRAN domain. Residues N4678 and D4687 each coordinate Mn(2+). A Nsp12 Interface domain is found at 4735 to 4833 (IEWPLLEYDY…MNMDVSLHRH (99 aa)). Zn(2+) is bound by residues H4764, C4770, C4775, C4779, and C4956. One can recognise a Nsp12 RNA-dependent RNA polymerase domain in the interval 4834–5401 (RLSLKELMMY…DLYTAPTTLQ (568 aa)). Residues 4836–5050 (SLKELMMYAA…HQKMLKSMAA (215 aa)) form a rdRp Fingers N-ter region. Residues 5051-5089 (TRGSTCVIGTTKFYGGWDFMLKTLYKDVDNPHLMGWDYP) form a rdRp Palm N-ter region. The RdRp catalytic domain occupies 5081–5243 (PHLMGWDYPK…CYNSDYATKG (163 aa)). Positions 5090–5148 (KCDRAMPNMCRIFASLILARKHSTCCTNTDRFYRLANECAQVLSEYVLCGGGYYVKPGG) are rdRp Fingers C-ter. Residues H5111, C5114, and C5115 each coordinate Zn(2+). The interval 5149–5284 (TSSGDATTAY…KKGPHEFCSQ (136 aa)) is rdRp Palm C-ter. Catalysis depends on residues S5228, D5229, and D5230. Positions 5285–5401 (HTLFIKDGDD…DLYTAPTTLQ (117 aa)) are rdRp Thumb. The 113-residue stretch at 5402–5514 (AVGSCVVCHS…TEFNRLATCD (113 aa)) folds into the CV ZBD domain. Zn(2+) contacts are provided by C5406, C5409, C5417, C5420, C5427, C5430, H5434, H5440, C5451, C5456, C5473, and H5476. Residues 5658–5839 (TVPEEFANHV…MCNLGPDIFL (182 aa)) form the (+)RNA virus helicase ATP-binding domain. Position 5683–5690 (5683–5690 (GPPGTGKS)) interacts with ATP. Residues 5840-6014 (SVCYRCPEEI…GLYKDCSRES (175 aa)) form the (+)RNA virus helicase C-terminal domain. The 216-residue stretch at 6071 to 6286 (LFITRDEAIR…RCLAIHDCFI (216 aa)) folds into the ExoN domain. Catalysis depends on residues D6089, E6091, and E6190. The Zn(2+) site is built by C6206, C6209, C6225, H6228, H6256, C6260, and H6263. Catalysis depends on residues H6267 and D6272. Position 6278 (C6278) interacts with Zn(2+). The N7-MTase domain maps to 6295–6523 (YPYISHEKRL…NLWSTFTKIQ (229 aa)). S-adenosyl-L-methionine is bound at residue 6330–6336 (DIGNPKG). The tract at residues 6409–6423 (CDGGSLYVNKHAFHT) is gpppA-binding. Zn(2+)-binding residues include C6447, C6469, C6480, and H6483. The Nsp15 N-terminal oligomerization domain maps to 6524–6584 (GLENIAYNVI…NIAFELYAKR (61 aa)). In terms of domain architecture, AV-Nsp11N/CoV-Nsp15M spans 6585–6715 (AVRSHPDFNL…IYKKVNNEFV (131 aa)). The NendoU domain occupies 6732 to 6871 (TPVSEMEKDF…KDGQVQTFYP (140 aa)). Residues H6762, H6777, K6817, K6920, D7004, K7044, and E7077 contribute to the active site. One can recognise a Nidovirus-type SAM-dependent 2'-O-MTase domain in the interval 6876–7170 (INDWKPGLAM…TLSVSTDVLV (295 aa)).

This sequence belongs to the coronaviruses polyprotein 1ab family. In terms of assembly, interacts with host PHB and PHB2. Interacts with papain-like protease nsp3 and non-structural protein 6. As to quaternary structure, monomer. Homodimer. Only the homodimer shows catalytic activity. In terms of assembly, interacts with nsp8 and nsp12 to form the replication-transcription complex (RTC): nsp12, nsp7, two subunits of nsp8, and up to two subunits of nsp13. Interacts with nsp7, nsp13 and nsp12 to form the replication-transcription complex (RTC): nsp12, nsp7, two subunits of nsp8, and up to two subunits of nsp13. As to quaternary structure, interacts with nsp12. In terms of assembly, interacts with proofreading exoribonuclease nsp14 and 2'-O-methyltransferase nsp16; these interactions enhance nsp14 and nsp16 enzymatic activities. Interacts with nsp7 and nsp8 to form the replication-transcription complex (RTC): nsp12, nsp7, two subunits of nsp8, and up to two subunits of nsp13. Interacts with nsp9. As to quaternary structure, interacts with nsp8 to form the replication-transcription complex (RTC): nsp12, nsp7, two subunits of nsp8, and up to two subunits of nsp13. Requires Mn(2+) as cofactor. It depends on Mg(2+) as a cofactor. In terms of processing, specific enzymatic cleavages in vivo by its own proteases yield mature proteins. 3CL-PRO and PL-PRO proteinases are autocatalytically processed.

It localises to the host membrane. The protein resides in the host cytoplasm. Its subcellular location is the host perinuclear region. The protein localises to the host endoplasmic reticulum-Golgi intermediate compartment. It catalyses the reaction RNA(n) + a ribonucleoside 5'-triphosphate = RNA(n+1) + diphosphate. It carries out the reaction ATP + H2O = ADP + phosphate + H(+). The enzyme catalyses Thiol-dependent hydrolysis of ester, thioester, amide, peptide and isopeptide bonds formed by the C-terminal Gly of ubiquitin (a 76-residue protein attached to proteins as an intracellular targeting signal).. The catalysed reaction is a 5'-end (N(7)-methyl 5'-triphosphoguanosine)-ribonucleoside in mRNA + S-adenosyl-L-methionine = a 5'-end (N(7)-methyl 5'-triphosphoguanosine)-(2'-O-methyl-ribonucleoside) in mRNA + S-adenosyl-L-homocysteine + H(+). It catalyses the reaction uridylyl-uridylyl-ribonucleotide-RNA = a 3'-end uridylyl-2',3'-cyclophospho-uridine-RNA + a 5'-end dephospho-ribonucleoside-RNA. It carries out the reaction a 5'-end diphospho-ribonucleoside in mRNA + GTP + H(+) = a 5'-end (5'-triphosphoguanosine)-ribonucleoside in mRNA + diphosphate. The enzyme catalyses a 5'-end (5'-triphosphoguanosine)-ribonucleoside in mRNA + S-adenosyl-L-methionine = a 5'-end (N(7)-methyl 5'-triphosphoguanosine)-ribonucleoside in mRNA + S-adenosyl-L-homocysteine. The replicase polyprotein of coronaviruses is a multifunctional protein: it contains the activities necessary for the transcription of negative stranded RNA, leader RNA, subgenomic mRNAs and progeny virion RNA as well as proteinases responsible for the cleavage of the polyprotein into functional products. In terms of biological role, inhibits host translation by interacting with the 40S ribosomal subunit. The nsp1-40S ribosome complex further induces an endonucleolytic cleavage near the 5'UTR of host mRNAs, targeting them for degradation. Viral mRNAs are not susceptible to nsp1-mediated endonucleolytic RNA cleavage thanks to the presence of a 5'-end leader sequence and are therefore protected from degradation. By suppressing host gene expression, nsp1 facilitates efficient viral gene expression in infected cells and evasion from host immune response. Its function is as follows. May play a role in the modulation of host cell survival signaling pathway by interacting with host PHB and PHB2. Indeed, these two proteins play a role in maintaining the functional integrity of the mitochondria and protecting cells from various stresses. Functionally, responsible for the cleavages located at the N-terminus of the replicase polyprotein. In addition, PL-PRO possesses a deubiquitinating/deISGylating activity and processes both 'Lys-48'- and 'Lys-63'-linked polyubiquitin chains from cellular substrates. Participates together with nsp4 in the assembly of virally-induced cytoplasmic double-membrane vesicles necessary for viral replication. Antagonizes innate immune induction of type I interferon by blocking the phosphorylation, dimerization and subsequent nuclear translocation of host IRF3. Also prevents host NF-kappa-B signaling. Participates in the assembly of virally-induced cytoplasmic double-membrane vesicles necessary for viral replication. In terms of biological role, cleaves the C-terminus of replicase polyprotein at 11 sites. Recognizes substrates containing the core sequence [ILMVF]-Q-|-[SGACN]. Also able to bind an ADP-ribose-1''-phosphate (ADRP). Its function is as follows. Plays a role in the initial induction of autophagosomes from host endoplasmic reticulum. Later, limits the expansion of these phagosomes that are no longer able to deliver viral components to lysosomes. Functionally, forms a hexadecamer with nsp8 (8 subunits of each) that may participate in viral replication by acting as a primase. Alternatively, may synthesize substantially longer products than oligonucleotide primers. Forms a hexadecamer with nsp7 (8 subunits of each) that may participate in viral replication by acting as a primase. Alternatively, may synthesize substantially longer products than oligonucleotide primers. In terms of biological role, forms a primer, NSP9-pU, which is utilized by the polymerase for the initiation of RNA chains. Interacts with ribosome signal recognition particle RNA (SRP). Together with NSP8, suppress protein integration into the cell membrane, thereby disrupting host immune defenses. Its function is as follows. Plays a pivotal role in viral transcription by stimulating both nsp14 3'-5' exoribonuclease and nsp16 2'-O-methyltransferase activities. Therefore plays an essential role in viral mRNAs cap methylation. Functionally, RNA-directed RNA polymerase that catalyzes the transcription of viral genomic and subgenomic RNAs. Acts in complex with nsp7 and nsp8 to transcribe both the minus and positive strands of genomic RNA. The kinase-like NiRAN domain of NSP12 attaches one or more nucleotides to the amino terminus of NSP9, forming a covalent RNA-protein intermediate that serves as transcription/replication primer. Subgenomic RNAs (sgRNAs) are formed by discontinuous transcription: The polymerase has the ability to pause at transcription-regulating sequences (TRS) and jump to the leader TRS, resulting in a major deletion. This creates a series of subgenomic RNAs that are replicated, transcribed and translated. In addition, Nsp12 is a subunit of the viral RNA capping enzyme that catalyzes the RNA guanylyltransferase reaction for genomic and sub-genomic RNAs. Subsequently, the NiRAN domain transfers RNA to GDP, and forms the core cap structure GpppA-RNA. Multi-functional protein with a zinc-binding domain in N-terminus displaying RNA and DNA duplex-unwinding activities with 5' to 3' polarity. Activity of helicase is dependent on magnesium. In terms of biological role, plays a role in viral RNA synthesis through two distinct activities. The N7-guanine methyltransferase activity plays a role in the formation of the cap structure GpppA-RNA. The proofreading exoribonuclease reduces the sensitivity of the virus to RNA mutagens during replication. This activity acts on both ssRNA and dsRNA in a 3'-5' direction. Its function is as follows. Plays a role in viral transcription/replication and prevents the simultaneous activation of host cell dsRNA sensors, such as MDA5/IFIH1, OAS, and PKR. Acts by degrading the 5'-polyuridines generated during replication of the poly(A) region of viral genomic and subgenomic RNAs. Catalyzes a two-step reaction in which a 2'3'-cyclic phosphate (2'3'-cP) is first generated by 2'-O transesterification, which is then hydrolyzed to a 3'-phosphate (3'-P). If not degraded, poly(U) RNA would hybridize with poly(A) RNA tails and activate host dsRNA sensors. Functionally, methyltransferase that mediates mRNA cap 2'-O-ribose methylation to the 5'-cap structure of viral mRNAs. N7-methyl guanosine cap is a prerequisite for binding of nsp16. Therefore plays an essential role in viral mRNAs cap methylation which is essential to evade immune system. This Pipistrellus abramus (Japanese pipistrelle) protein is Replicase polyprotein 1ab (rep).